A 347-amino-acid chain; its full sequence is NADH-ubiquinone oxidoreductase chain 2 (347 aa).

Transmembrane regions (helical) follow at residues 1–21 (MNPLTFAMILLTIMLGTTIVM), 25–45 (HWLVVWIGFEMNMLAVIPVLM), 59–79 (YFLTQATASMLLMLAIVINLI), 96–116 (IIMTLALAMKLGLAPFHFWVP), 122–142 (IQLSSGLILLTWQKLAPISIL), 150–170 (NLNLLLAMSILSVAIGGWGGL), 201–221 (ALLNLVIYILLTTTTFSVFML), 242–262 (TALLMTMLSLGGLPPLSGFLP), 274–294 (NSVIVPTTMAITALLNLYFYM), and 326–346 (LSPLIILSTLILPLSPILTLL).

The protein belongs to the complex I subunit 2 family. As to quaternary structure, core subunit of respiratory chain NADH dehydrogenase (Complex I) which is composed of 45 different subunits. Interacts with TMEM242.

Its subcellular location is the mitochondrion inner membrane. The enzyme catalyses a ubiquinone + NADH + 5 H(+)(in) = a ubiquinol + NAD(+) + 4 H(+)(out). Core subunit of the mitochondrial membrane respiratory chain NADH dehydrogenase (Complex I) which catalyzes electron transfer from NADH through the respiratory chain, using ubiquinone as an electron acceptor. Essential for the catalytic activity and assembly of complex I. This chain is NADH-ubiquinone oxidoreductase chain 2, found in Eidolon helvum (Straw-colored fruit bat).